We begin with the raw amino-acid sequence, 457 residues long: B-cell linker protein (457 aa).

The tract at residues 38 to 306 (KLKVKGPPSV…FPPTQKPVLQ (269 aa)) is disordered. Positions 57–74 (PADEEEQWSDDFDSDYEN) are enriched in acidic residues. Residues Tyr72, Tyr84, Tyr96, Tyr178, and Tyr189 each carry the phosphotyrosine; by SYK modification. A compositionally biased stretch (acidic residues) spans 172–187 (LEDEADYVVPVEDNDE). 2 stretches are compositionally biased toward polar residues: residues 206–218 (VNRS…SSKH) and 256–270 (PLKT…NASN). Over residues 272 to 290 (CEEKPVPAERHRGSSHRQD) the composition is skewed to basic and acidic residues. The SH2 domain occupies 347 to 454 (WYAGACDRKS…KDSTRLKYAV (108 aa)).

As to quaternary structure, associates with PLCG1, VAV1 and NCK1 in a B-cell antigen receptor-dependent fashion. Interacts with VAV3, PLCG2 and GRB2. Interacts through its SH2 domain with CD79A. Interacts (via SH2 domain) with SYK; phosphorylated and activated by SYK. Interacts (via SH2 domain) with SCIMP; this interaction is dependent on phosphorylation of SCIMP 'Tyr-120'. Post-translationally, following BCR activation, phosphorylated on tyrosine residues by SYK and LYN. When phosphorylated, serves as a scaffold to assemble downstream targets of antigen activation, including PLCG1, VAV1, GRB2 and NCK1. Phosphorylation of Tyr-84, Tyr-178 and Tyr-189 facilitates PLCG1 binding. Phosphorylation of Tyr-96 facilitates BTK binding. Phosphorylation of Tyr-72 facilitates VAV1 and NCK1 binding. Phosphorylation is required for both Ca(2+) and MAPK signaling pathways.

The protein localises to the cytoplasm. The protein resides in the cell membrane. Functionally, functions as a central linker protein, downstream of the B-cell receptor (BCR), bridging the SYK kinase to a multitude of signaling pathways and regulating biological outcomes of B-cell function and development. Plays a role in the activation of ERK/EPHB2, MAP kinase p38 and JNK. Modulates AP1 activation. Important for the activation of NF-kappa-B and NFAT. Plays an important role in BCR-mediated PLCG1 and PLCG2 activation and Ca(2+) mobilization and is required for trafficking of the BCR to late endosomes. However, does not seem to be required for pre-BCR-mediated activation of MAP kinase and phosphatidyl-inositol 3 (PI3) kinase signaling. May be required for the RAC1-JNK pathway. Plays a critical role in orchestrating the pro-B cell to pre-B cell transition. May play an important role in BCR-induced B-cell apoptosis. The sequence is that of B-cell linker protein (Blnk) from Rattus norvegicus (Rat).